The chain runs to 229 residues: 2,3-bisphosphoglycerate-dependent phosphoglycerate mutase 2 (229 aa).

Residues 8–15 (RHGQSEWN), 21–22 (TG), Arg60, 87–90 (ERHY), Lys98, 114–115 (RR), and 183–184 (GN) each bind substrate. The active-site Tele-phosphohistidine intermediate is the His9. Glu87 serves as the catalytic Proton donor/acceptor.

This sequence belongs to the phosphoglycerate mutase family. BPG-dependent PGAM subfamily.

The enzyme catalyses (2R)-2-phosphoglycerate = (2R)-3-phosphoglycerate. It functions in the pathway carbohydrate degradation; glycolysis; pyruvate from D-glyceraldehyde 3-phosphate: step 3/5. Functionally, catalyzes the interconversion of 2-phosphoglycerate and 3-phosphoglycerate. This chain is 2,3-bisphosphoglycerate-dependent phosphoglycerate mutase 2, found in Latilactobacillus sakei subsp. sakei (strain 23K) (Lactobacillus sakei subsp. sakei).